Reading from the N-terminus, the 154-residue chain is Myoglobin (154 aa).

The region spanning 2–148 (GLSDQEWQHV…FRNDMASKYK (147 aa)) is the Globin domain. Residue His65 participates in nitrite binding. His65 is a binding site for O2. Residue His94 coordinates heme b.

The protein belongs to the globin family. As to quaternary structure, monomeric.

The protein resides in the cytoplasm. It localises to the sarcoplasm. The enzyme catalyses Fe(III)-heme b-[protein] + nitric oxide + H2O = Fe(II)-heme b-[protein] + nitrite + 2 H(+). The catalysed reaction is H2O2 + AH2 = A + 2 H2O. Monomeric heme protein which primary function is to store oxygen and facilitate its diffusion within muscle tissues. Reversibly binds oxygen through a pentacoordinated heme iron and enables its timely and efficient release as needed during periods of heightened demand. Depending on the oxidative conditions of tissues and cells, and in addition to its ability to bind oxygen, it also has a nitrite reductase activity whereby it regulates the production of bioactive nitric oxide. Under stress conditions, like hypoxia and anoxia, it also protects cells against reactive oxygen species thanks to its pseudoperoxidase activity. The protein is Myoglobin (MB) of Uria lomvia (Thick-billed murre).